The sequence spans 160 residues: Transcription elongation factor GreA (160 aa).

Residues 1–72 (MAEKTYPMTL…QISSLETKIR (72 aa)) adopt a coiled-coil conformation.

This sequence belongs to the GreA/GreB family.

Functionally, necessary for efficient RNA polymerase transcription elongation past template-encoded arresting sites. The arresting sites in DNA have the property of trapping a certain fraction of elongating RNA polymerases that pass through, resulting in locked ternary complexes. Cleavage of the nascent transcript by cleavage factors such as GreA or GreB allows the resumption of elongation from the new 3'terminus. GreA releases sequences of 2 to 3 nucleotides. The chain is Transcription elongation factor GreA from Streptococcus sanguinis (strain SK36).